The following is a 302-amino-acid chain: Methionyl-tRNA formyltransferase (302 aa).

108–111 provides a ligand contact to (6S)-5,6,7,8-tetrahydrofolate; it reads SILP.

The protein belongs to the Fmt family.

It carries out the reaction L-methionyl-tRNA(fMet) + (6R)-10-formyltetrahydrofolate = N-formyl-L-methionyl-tRNA(fMet) + (6S)-5,6,7,8-tetrahydrofolate + H(+). In terms of biological role, attaches a formyl group to the free amino group of methionyl-tRNA(fMet). The formyl group appears to play a dual role in the initiator identity of N-formylmethionyl-tRNA by promoting its recognition by IF2 and preventing the misappropriation of this tRNA by the elongation apparatus. This is Methionyl-tRNA formyltransferase from Sulfurimonas denitrificans (strain ATCC 33889 / DSM 1251) (Thiomicrospira denitrificans (strain ATCC 33889 / DSM 1251)).